Reading from the N-terminus, the 214-residue chain is GTP cyclohydrolase 1 (214 aa).

Positions 101, 104, and 172 each coordinate Zn(2+).

Belongs to the GTP cyclohydrolase I family. Toroid-shaped homodecamer, composed of two pentamers of five dimers.

The catalysed reaction is GTP + H2O = 7,8-dihydroneopterin 3'-triphosphate + formate + H(+). It participates in cofactor biosynthesis; 7,8-dihydroneopterin triphosphate biosynthesis; 7,8-dihydroneopterin triphosphate from GTP: step 1/1. This chain is GTP cyclohydrolase 1, found in Gloeobacter violaceus (strain ATCC 29082 / PCC 7421).